Here is a 122-residue protein sequence, read N- to C-terminus: Probable DNA-directed RNA polymerase II subunit RPB11 (122 aa).

It belongs to the archaeal Rpo11/eukaryotic RPB11/RPC19 RNA polymerase subunit family. Component of the RNA polymerase II (Pol II) complex consisting of 12 subunits.

It is found in the nucleus. Functionally, DNA-dependent RNA polymerase catalyzes the transcription of DNA into RNA using the four ribonucleoside triphosphates as substrates. Component of RNA polymerase II which synthesizes mRNA precursors and many functional non-coding RNAs. Pol II is the central component of the basal RNA polymerase II transcription machinery. It is composed of mobile elements that move relative to each other. RPB11 is part of the core element with the central large cleft. In Caenorhabditis elegans, this protein is Probable DNA-directed RNA polymerase II subunit RPB11 (rpb-11).